The following is a 48-amino-acid chain: M-oxotoxin-Ot1a (48 aa).

As to expression, expressed by the venom gland.

The protein localises to the secreted. It localises to the target cell membrane. Its function is as follows. Disrupts cell membranes, particularly those rich in phosphocholine, through formation of pores. Has antimicrobial activity against Gram-negative bacterium E.coli, Gram-positive bacteria B.subtilis and S.aureus, and hemolytic activity against sheep, pig and guinea pig erythrocytes. Has insecticidal activity against S.frugiperda ovarian cells by opening non-selective ion channels. Enhances the insecticidal activity of spider venom neurotoxic peptides. In Oxyopes takobius (Lynx spider), this protein is M-oxotoxin-Ot1a.